The chain runs to 253 residues: Low affinity immunoglobulin gamma Fc region receptor III-B (253 aa).

The first 20 residues, 1 to 20, serve as a signal peptide directing secretion; it reads MGQPLPPVALLLLVSASSRA. At 21–207 the chain is on the extracellular side; that stretch reads ADVPKALVLL…VSSSVLPWHQ (187 aa). 2 consecutive Ig-like C2-type domains span residues 24 to 105 and 120 to 189; these read PKAL…LRVH and EGEP…VTIT. Cystine bridges form between cysteine 47–cysteine 89 and cysteine 128–cysteine 172. 4 N-linked (GlcNAc...) asparagine glycosylation sites follow: asparagine 56, asparagine 63, asparagine 165, and asparagine 180. The helical transmembrane segment at 208–226 threads the bilayer; the sequence is IAFCLVMGLLLAADTGLYF. The Cytoplasmic segment spans residues 227–253; sequence SVQRDLRSSQRARKEHTLGWSLGSQDK.

Forms a heterooligomeric complex with ITAM-containing signaling subunits FCER1G. Interacts (via transmembrane domain) with signaling subunits; this interaction is a prerequisite for receptor complex expression on the cell surface and intracellular signal transduction. Binds the Fc region of antigen-complexed IgG.

It localises to the cell membrane. Functionally, receptor for the invariable Fc fragment of immunoglobulin gamma (IgG). Optimally activated upon binding of clustered antigen-IgG complexes displayed on cell surfaces, triggers lysis of antibody-coated cells, a process known as antibody-dependent cellular cytotoxicity (ADCC). Does not bind free monomeric IgG, thus avoiding inappropriate effector cell activation in the absence of antigenic trigger. Mediates IgG effector functions on natural killer (NK) cells. Binds antigen-IgG complexes generated upon infection and triggers NK cell-dependent cytokine production and degranulation to limit viral load and propagation. Fc-binding subunit that associates with FCER1G adapters to form functional signaling complexes. Following the engagement of antigen-IgG complexes, triggers phosphorylation of immunoreceptor tyrosine-based activation motif (ITAM)-containing adapters with subsequent activation of phosphatidylinositol 3-kinase signaling and sustained elevation of intracellular calcium that ultimately drive NK cell activation. Mediates enhanced ADCC in response to afucosylated IgGs. The protein is Low affinity immunoglobulin gamma Fc region receptor III-B (FCGR3B) of Oryctolagus cuniculus (Rabbit).